We begin with the raw amino-acid sequence, 683 residues long: Leucine zipper putative tumor suppressor 2 homolog (683 aa).

Disordered stretches follow at residues 1-37, 82-107, and 262-320; these read MAAL…TMGS, YSSQ…NNGN, and MGHI…CDRS. 2 stretches are compositionally biased toward polar residues: residues 11–37 and 96–107; these read IDQN…TMGS and KPSTTTSGNNGN. The segment covering 290–308 has biased composition (low complexity); that stretch reads SDSGRSSSSKSTGSLSGRG. The stretch at 324–665 forms a coiled coil; the sequence is SDEILIRELE…LELEARELDE (342 aa).

It belongs to the LZTS2 family.

The protein resides in the cytoplasm. It localises to the cytoskeleton. Its subcellular location is the microtubule organizing center. It is found in the centrosome. Negative regulator of katanin-mediated microtubule severing and release from the centrosome. Required for central spindle formation and the completion of cytokinesis. Negative regulator of the Wnt signaling pathway. Represses beta-catenin-mediated transcriptional activation by promoting the nuclear exclusion of beta-catenin. The protein is Leucine zipper putative tumor suppressor 2 homolog (lzts2) of Xenopus tropicalis (Western clawed frog).